The primary structure comprises 141 residues: ATP synthase epsilon chain (141 aa).

It belongs to the ATPase epsilon chain family. F-type ATPases have 2 components, CF(1) - the catalytic core - and CF(0) - the membrane proton channel. CF(1) has five subunits: alpha(3), beta(3), gamma(1), delta(1), epsilon(1). CF(0) has three main subunits: a, b and c.

The protein localises to the cell inner membrane. Functionally, produces ATP from ADP in the presence of a proton gradient across the membrane. This Burkholderia multivorans (strain ATCC 17616 / 249) protein is ATP synthase epsilon chain.